A 177-amino-acid chain; its full sequence is Large ribosomal subunit protein uL6 (177 aa).

It belongs to the universal ribosomal protein uL6 family. As to quaternary structure, part of the 50S ribosomal subunit.

This protein binds to the 23S rRNA, and is important in its secondary structure. It is located near the subunit interface in the base of the L7/L12 stalk, and near the tRNA binding site of the peptidyltransferase center. The protein is Large ribosomal subunit protein uL6 of Halorhodospira halophila (strain DSM 244 / SL1) (Ectothiorhodospira halophila (strain DSM 244 / SL1)).